The primary structure comprises 178 residues: TM2 domain-containing protein biscotti (178 aa).

A signal peptide spans 1–18; that stretch reads MFPVLLLLLFFFAKETHQ. Topologically, residues 19-99 are extracellular; it reads INVDCNELQM…YHLDTTLLLS (81 aa). N-linked (GlcNAc...) asparagine glycosylation is found at asparagine 69 and asparagine 75. The TM2 domain maps to 94 to 137; that stretch reads TTLLLSVFLGMFGVDRFYLGYPGIGLLKFCTLGGMFLGQLIDIV. A helical transmembrane segment spans residues 100-120; that stretch reads VFLGMFGVDRFYLGYPGIGLL. At 121 to 124 the chain is on the cytoplasmic side; the sequence is KFCT. Residues 125–145 traverse the membrane as a helical segment; sequence LGGMFLGQLIDIVLIALQVVG. At 146 to 178 the chain is on the extracellular side; sequence PADGSAYVIPYYGAGIHIVRSDNTTYRLPRDDW. Residue asparagine 168 is glycosylated (N-linked (GlcNAc...) asparagine).

The protein belongs to the TM2 family.

It localises to the membrane. Positive regulator of Notch signaling. Maternal neurogenic factor involved in Notch signaling-dependent neuroectodermal specification during early embryogenesis. Functions cooperatively with amx/TM2D3 and amrt/TM2D2. The sequence is that of TM2 domain-containing protein biscotti from Drosophila melanogaster (Fruit fly).